We begin with the raw amino-acid sequence, 944 residues long: Breast cancer type 2 susceptibility protein homolog (944 aa).

Composition is skewed to basic and acidic residues over residues 325–348 (KKVKLEPSSQKEQKSSKDSNESKI) and 415–431 (NSIKRNDEEQPEKETPN). Disordered stretches follow at residues 325 to 354 (KKVKLEPSSQKEQKSSKDSNESKIRAASCD) and 415 to 440 (NSIKRNDEEQPEKETPNKSRSTSSHQ). BRCA2 repeat units follow at residues 543–577 (AEPEFCGFRTASNKAIPISEKMKIKTAEFMAEFQS), 644–678 (NESQFFGFRTASNKAIEITEAMEKRGAMFLAQSRA), and 719–753 (SETEFFGFRTASNKGIVISENTKKKVAQFMSEFQA). Disordered regions lie at residues 823 to 854 (LCSQPLVRTPRRSQEIHSSLSQLAGQSPLDQA) and 876 to 944 (SSTE…RSRY). Polar residues-rich tracts occupy residues 838-852 (IHSSLSQLAGQSPLD) and 876-885 (SSTETSTSCA). Residues 904 to 921 (ADRDLNRSKDCAKNRQDA) are compositionally biased toward basic and acidic residues. The span at 932–944 (KKSRRLGLSRSRY) shows a compositional bias: basic residues.

In terms of assembly, interacts with Rad9 and spn-A/Rad51.

Its subcellular location is the nucleus. In terms of biological role, involved in and required for double-strand break repair by meiotic and mitotic homologous recombination. During meiosis, has a dual role in the repair of meiotic double-stranded breaks and the efficient activation of the meiotic recombination checkpoint. This Drosophila simulans (Fruit fly) protein is Breast cancer type 2 susceptibility protein homolog.